A 549-amino-acid polypeptide reads, in one-letter code: Pyrophosphate--fructose 6-phosphate 1-phosphotransferase (549 aa).

Gly-78 contacts diphosphate. Asp-172 contacts Mg(2+). Residues 200–202 (TID), 239–240 (KY), 247–249 (MGR), Glu-308, and 421–424 (YEGR) contribute to the substrate site. The active-site Proton acceptor is Asp-202.

Belongs to the phosphofructokinase type A (PFKA) family. PPi-dependent PFK group II subfamily. Clade 'Long' sub-subfamily. In terms of assembly, homodimer. It depends on Mg(2+) as a cofactor.

The protein resides in the cytoplasm. The enzyme catalyses beta-D-fructose 6-phosphate + diphosphate = beta-D-fructose 1,6-bisphosphate + phosphate + H(+). The protein operates within carbohydrate degradation; glycolysis; D-glyceraldehyde 3-phosphate and glycerone phosphate from D-glucose: step 3/4. Its activity is regulated as follows. Non-allosteric. Its function is as follows. Catalyzes the phosphorylation of D-fructose 6-phosphate, the first committing step of glycolysis. Uses inorganic phosphate (PPi) as phosphoryl donor instead of ATP like common ATP-dependent phosphofructokinases (ATP-PFKs), which renders the reaction reversible, and can thus function both in glycolysis and gluconeogenesis. Consistently, PPi-PFK can replace the enzymes of both the forward (ATP-PFK) and reverse (fructose-bisphosphatase (FBPase)) reactions. This is Pyrophosphate--fructose 6-phosphate 1-phosphotransferase from Porphyromonas gingivalis (Bacteroides gingivalis).